We begin with the raw amino-acid sequence, 435 residues long: GTPase Obg (435 aa).

Residues 6–164 (ADFVDRVKIF…RWLELELKIL (159 aa)) form the Obg domain. Residues 165-335 (ADVGLVGYPN…LVSKLASIVR (171 aa)) enclose the OBG-type G domain. GTP contacts are provided by residues 171-178 (GYPNVGKS), 196-200 (FTTLI), 217-220 (DIPG), 287-290 (NKID), and 316-318 (SAV). 2 residues coordinate Mg(2+): serine 178 and threonine 198. In terms of domain architecture, OCT spans 357-435 (RRLPEKFHLE…IGDFEFEYRE (79 aa)).

The protein belongs to the TRAFAC class OBG-HflX-like GTPase superfamily. OBG GTPase family. Monomer. The cofactor is Mg(2+).

Its subcellular location is the cytoplasm. Functionally, an essential GTPase which binds GTP, GDP and possibly (p)ppGpp with moderate affinity, with high nucleotide exchange rates and a fairly low GTP hydrolysis rate. Plays a role in control of the cell cycle, stress response, ribosome biogenesis and in those bacteria that undergo differentiation, in morphogenesis control. The chain is GTPase Obg from Thermotoga petrophila (strain ATCC BAA-488 / DSM 13995 / JCM 10881 / RKU-1).